The primary structure comprises 459 residues: uncharacterized protein (459 aa).

This is an uncharacterized protein from Orgyia pseudotsugata (Douglas-fir tussock moth).